A 456-amino-acid polypeptide reads, in one-letter code: Major facilitator superfamily domain-containing protein 10 (456 aa).

11 helical membrane passes run 25–45 (VVAV…LLLP), 87–107 (VLFG…SAPL), 125–145 (LAGV…AAFL), 149–169 (VIGG…ADLG), 179–199 (AVIG…GAFL), 204–224 (VPWL…CFLP), 278–298 (LVYF…SFLV), 311–328 (KMFF…GAYA), 343–363 (AILL…LPIL), 365–385 (LGLL…SSVV), and 422–442 (LAGA…PFSI).

Belongs to the major facilitator superfamily.

It localises to the nucleus inner membrane. Its subcellular location is the cell membrane. Functionally, probable organic anion transporter which may serve as a transporter for some non-steroidal anti-inflammatory drugs (NSAIDs) as well as other organic anions across the luminal membranes of renal proximal tubules at the final excretion step into the urine. This Bos taurus (Bovine) protein is Major facilitator superfamily domain-containing protein 10 (MFSD10).